The sequence spans 235 residues: Urease accessory protein UreF (235 aa).

It belongs to the UreF family. UreD, UreF and UreG form a complex that acts as a GTP-hydrolysis-dependent molecular chaperone, activating the urease apoprotein by helping to assemble the nickel containing metallocenter of UreC. The UreE protein probably delivers the nickel.

The protein resides in the cytoplasm. Its function is as follows. Required for maturation of urease via the functional incorporation of the urease nickel metallocenter. This Ureaplasma urealyticum serovar 10 (strain ATCC 33699 / Western) protein is Urease accessory protein UreF.